Reading from the N-terminus, the 614-residue chain is NADH-quinone oxidoreductase subunit L (614 aa).

A run of 15 helical transmembrane segments spans residues 1-21 (MSIIFFIILFPLIGFLFLSTI), 33-53 (IGIFSIFISFFITCFYGVSIL), 79-99 (FFLDGLSLSMLFVITGVGLLI), 136-156 (FLFMYLGWEGVSVCSYLLIGF), 168-188 (FKAFILTRVSDVFLMIGMFLI), 207-227 (LNVENFYYLDYITLFLLLGVI), 247-267 (TPVSALIHAATMVTAGVYLIA), 271-291 (FLFLLTPGILYLVGLIGTLTI), 327-347 (AWSAAITHLIMHAIFKALLFL), 372-392 (LPFLYISFIVGGASLVSFPLI), 410-430 (GCIDFFIIGLFCSFLTAIYTF), 455-475 (IPLFVLLLLSTVFGSYISPPL), 492-512 (FEIICSILSLSGIYLSYYIWI), 533-553 (FFLKGWGFNWFYKISFVYFYL), and 593-613 (YVASMILGINFIFLLMLFFYF).

The protein belongs to the complex I subunit 5 family. In terms of assembly, composed of 13 different subunits. Subunits NuoA, H, J, K, L, M, N constitute the membrane sector of the complex.

Its subcellular location is the cell membrane. The enzyme catalyses a quinone + NADH + 5 H(+)(in) = a quinol + NAD(+) + 4 H(+)(out). Its function is as follows. NDH-1 shuttles electrons from NADH, via FMN and iron-sulfur (Fe-S) centers, to quinones in the respiratory chain. Couples the redox reaction to proton translocation (for every two electrons transferred, four hydrogen ions are translocated across the cytoplasmic membrane), and thus conserves the redox energy in a proton gradient. This is NADH-quinone oxidoreductase subunit L (nuoL) from Buchnera aphidicola subsp. Acyrthosiphon pisum (strain APS) (Acyrthosiphon pisum symbiotic bacterium).